Consider the following 372-residue polypeptide: NAD(P)H-quinone oxidoreductase subunit 1, chloroplastic (372 aa).

The next 8 helical transmembrane spans lie at 28–48, 65–85, 97–117, 128–148, 166–186, 254–274, 312–332, and 352–372; these read IWIC…VLVI, PEYA…KLIL, WLFT…YLVV, IGIG…GLLI, AAQA…IILM, FGLF…FVSV, GIIG…LAVL, and FLLP…ITLL.

Belongs to the complex I subunit 1 family. NDH is composed of at least 16 different subunits, 5 of which are encoded in the nucleus.

The protein localises to the plastid. It localises to the chloroplast thylakoid membrane. The enzyme catalyses a plastoquinone + NADH + (n+1) H(+)(in) = a plastoquinol + NAD(+) + n H(+)(out). It catalyses the reaction a plastoquinone + NADPH + (n+1) H(+)(in) = a plastoquinol + NADP(+) + n H(+)(out). Functionally, NDH shuttles electrons from NAD(P)H:plastoquinone, via FMN and iron-sulfur (Fe-S) centers, to quinones in the photosynthetic chain and possibly in a chloroplast respiratory chain. The immediate electron acceptor for the enzyme in this species is believed to be plastoquinone. Couples the redox reaction to proton translocation, and thus conserves the redox energy in a proton gradient. The protein is NAD(P)H-quinone oxidoreductase subunit 1, chloroplastic of Staurastrum punctulatum (Green alga).